The chain runs to 479 residues: Dihydrolipoyl dehydrogenase (479 aa).

FAD-binding positions include 41 to 50 (EKRGALGGTC), Lys59, Ala124, and 153 to 155 (TGS). A disulfide bridge connects residues Cys50 and Cys55. Residues 190-197 (GGGVIGLE), Glu213, Ile247, and Gly284 each bind NAD(+). FAD contacts are provided by residues Asp325 and 332–335 (MLAH). The active-site Proton acceptor is His458.

The protein belongs to the class-I pyridine nucleotide-disulfide oxidoreductase family. Homodimer. The cofactor is FAD.

The enzyme catalyses N(6)-[(R)-dihydrolipoyl]-L-lysyl-[protein] + NAD(+) = N(6)-[(R)-lipoyl]-L-lysyl-[protein] + NADH + H(+). The protein is Dihydrolipoyl dehydrogenase of Trypanosoma brucei brucei.